Reading from the N-terminus, the 343-residue chain is MIEMRLSDLAQQLNAKLHGDENIIITGVASINNAQVGHITFLKDQRFLSQLSSCRASAVILSKNNLIFCKIAALVVEDPYIAYVKIARLMDTTPKPSKNIASGAIIASDAILGQRVGIGANAVIESEVILGDDVIIGPGSFVGKKTRIGTGTRLWANVTIYHEVEIGECCLIQSGAIIGSDGFGYINDHGVWIKIPHLGTVKIGNNVEIGACTTIDRGTLDDTKIENGVIIDNQCQIAHNVIIGARTAIAGGVIMAGSLTIGRDCMIGGASVINGHINICDKVTITGMGMVIKAITQPGIYSSGIPVQLNTVWWKTAALIMRISNMNKRIKTIEEKLKKLLFL.

The active-site Proton acceptor is the His-239.

The protein belongs to the transferase hexapeptide repeat family. LpxD subfamily. In terms of assembly, homotrimer.

It carries out the reaction a UDP-3-O-[(3R)-3-hydroxyacyl]-alpha-D-glucosamine + a (3R)-hydroxyacyl-[ACP] = a UDP-2-N,3-O-bis[(3R)-3-hydroxyacyl]-alpha-D-glucosamine + holo-[ACP] + H(+). It catalyses the reaction UDP-3-O-[(3R)-3-hydroxytetradecanoyl]-alpha-D-glucosamine + (3R)-hydroxytetradecanoyl-[ACP] = UDP-2-N,3-O-bis[(3R)-3-hydroxytetradecanoyl]-alpha-D-glucosamine + holo-[ACP] + H(+). It functions in the pathway glycolipid biosynthesis; lipid IV(A) biosynthesis; lipid IV(A) from (3R)-3-hydroxytetradecanoyl-[acyl-carrier-protein] and UDP-N-acetyl-alpha-D-glucosamine: step 3/6. In terms of biological role, catalyzes the N-acylation of UDP-3-O-(hydroxytetradecanoyl)glucosamine using 3-hydroxytetradecanoyl-ACP as the acyl donor. Is involved in the biosynthesis of lipid A, a phosphorylated glycolipid that anchors the lipopolysaccharide to the outer membrane of the cell. The polypeptide is UDP-3-O-(3-hydroxymyristoyl)glucosamine N-acyltransferase (Blochmanniella pennsylvanica (strain BPEN)).